The sequence spans 1028 residues: RNA cytidine acetyltransferase 1 (1028 aa).

ATP-binding positions include 286-295 (GRGKSAALGL) and arginine 460. The region spanning 548 to 731 (VLLGPVDESK…FAPFYISQIP (184 aa)) is the N-acetyltransferase domain. Acetyl-CoA is bound by residues 619–621 (IAV), 626–632 (MKMGYGS), and lysine 719. A disordered region spans residues 989-1028 (ISIESTKTDNKKEKPSGFDKSAKKRGNDKHSSTSNKKRRA). The span at 994–1009 (TKTDNKKEKPSGFDKS) shows a compositional bias: basic and acidic residues.

It belongs to the RNA cytidine acetyltransferase family. NAT10 subfamily.

Its subcellular location is the nucleus. It is found in the nucleolus. The catalysed reaction is a cytidine in 18S rRNA + acetyl-CoA + ATP + H2O = an N(4)-acetylcytidine in 18S rRNA + ADP + phosphate + CoA + H(+). It carries out the reaction a cytidine in tRNA + acetyl-CoA + ATP + H2O = an N(4)-acetylcytidine in tRNA + ADP + phosphate + CoA + H(+). RNA cytidine acetyltransferase with specificity toward both 18S rRNA and tRNAs. Catalyzes the formation of N(4)-acetylcytidine (ac4C) in 18S rRNA. Required for early nucleolar cleavages of precursor rRNA at sites A0, A1 and A2 during 18S rRNA synthesis. Catalyzes the formation of ac4C in serine and leucine tRNAs. Requires a tRNA-binding adapter protein for full tRNA acetyltransferase activity but not for 18S rRNA acetylation. The sequence is that of RNA cytidine acetyltransferase 1 from Arabidopsis thaliana (Mouse-ear cress).